We begin with the raw amino-acid sequence, 58 residues long: Ribosome biogenesis protein Nop10 (58 aa).

This sequence belongs to the NOP10 family.

In terms of biological role, involved in ribosome biogenesis; more specifically in 18S rRNA pseudouridylation and in cleavage of pre-rRNA. This is Ribosome biogenesis protein Nop10 from Thermococcus onnurineus (strain NA1).